Here is a 950-residue protein sequence, read N- to C-terminus: Oxysterol-binding protein-related protein 1 (950 aa).

The segment at 1 to 237 (MNTEAEQQLL…NKVVHKALKR (237 aa)) is interaction with RAB7A. ANK repeat units lie at residues 47–76 (LGWT…KVNM), 80–109 (MGDT…DSTV), and 175–204 (LGNT…DPSL). A PH domain is found at 235–334 (LKRYEGPLWK…WLEAIEEHSA (100 aa)). Positions 430 to 463 (NFKLEQEQEKNKILSEALETLATEHHELERSLVE) form a coiled coil. The short motif at 469 to 483 (SILSEEEFYDALSGS) is the FFAT element. Phosphoserine is present on Ser499. Disordered stretches follow at residues 502-530 (ENEV…SNGI) and 795-821 (KKNT…VPDS). Positions 879 to 913 (RAMENGEIDLASEEKKRLEEKQRAARKNRSKSEED) form a coiled coil.

This sequence belongs to the OSBP family. As to quaternary structure, interacts (via FFAT motif) with VAPA and VAPB. Interacts with the GTP-bound form of RAB7A. Interacts with OAS1B. Interacts (via FFAT motif) with MOSPD2 (via MSP domain). As to expression, ubiquitous.

It localises to the late endosome. Functionally, binds phospholipids; exhibits strong binding to phosphatidic acid and weak binding to phosphatidylinositol 3-phosphate. Stabilizes GTP-bound RAB7A on late endosomes/lysosomes and alters functional properties of late endocytic compartments via its interaction with RAB7A. Binds 25-hydroxycholesterol and cholesterol. This Mus musculus (Mouse) protein is Oxysterol-binding protein-related protein 1.